The chain runs to 345 residues: Phosphoribosylformylglycinamidine cyclo-ligase (345 aa).

It belongs to the AIR synthase family.

The protein resides in the cytoplasm. The enzyme catalyses 2-formamido-N(1)-(5-O-phospho-beta-D-ribosyl)acetamidine + ATP = 5-amino-1-(5-phospho-beta-D-ribosyl)imidazole + ADP + phosphate + H(+). It functions in the pathway purine metabolism; IMP biosynthesis via de novo pathway; 5-amino-1-(5-phospho-D-ribosyl)imidazole from N(2)-formyl-N(1)-(5-phospho-D-ribosyl)glycinamide: step 2/2. In Enterobacter sp. (strain 638), this protein is Phosphoribosylformylglycinamidine cyclo-ligase.